The chain runs to 426 residues: Protein trichome birefringence-like 19 (426 aa).

Residues 15–35 (LLIAVTIATSLLTIIPLLYPL) form a helical; Signal-anchor for type II membrane protein membrane-spanning segment. The GDS motif motif lies at 142–144 (GDS). The DCXHWCLPGXXDXWN motif motif lies at 388–402 (DCVHWCLPGPIDNLN).

This sequence belongs to the PC-esterase family. TBL subfamily.

The protein resides in the membrane. Functionally, may act as a bridging protein that binds pectin and other cell wall polysaccharides. Probably involved in maintaining esterification of pectins. May be involved in the specific O-acetylation of cell wall polymers. This Arabidopsis thaliana (Mouse-ear cress) protein is Protein trichome birefringence-like 19 (TBL19).